The primary structure comprises 1252 residues: Immunoglobulin superfamily DCC subclass member 4 (1252 aa).

The first 22 residues, 1–22 (MARADTGRGLLVLTFCLLSARG), serve as a signal peptide directing secretion. The Extracellular segment spans residues 23-956 (ELPLPQETTV…SDSLDVHAVT (934 aa)). Ig-like domains follow at residues 27 to 136 (PQET…VAVV), 142 to 228 (EDFS…ASLT), 241 to 329 (QDVV…AELR), and 334 to 420 (PAIS…APLA). Intrachain disulfides connect Cys55–Cys120 and Cys163–Cys211. An N-linked (GlcNAc...) asparagine glycan is attached at Asn88. The N-linked (GlcNAc...) asparagine glycan is linked to Asn251. Intrachain disulfides connect Cys264–Cys311 and Cys355–Cys404. 5 consecutive Fibronectin type-III domains span residues 430-524 (APTR…TLDD), 526-622 (PSAA…TPGV), 631-742 (APAE…TPDL), 751-844 (PPAH…TLPD), and 849-944 (PPSD…TLQK). Residues 669-688 (TEEEADGDRPPGGRGDQAWD) are disordered. A helical transmembrane segment spans residues 957–977 (GIIVGVCLGLLCLLACMCAGL). Residues 978–1252 (RRSSHREALP…RAPVSSAQVP (275 aa)) lie on the Cytoplasmic side of the membrane. Position 994 is a phosphothreonine (Thr994).

This sequence belongs to the immunoglobulin superfamily. DCC family. In terms of tissue distribution, expressed in skeletal muscle, heart and brain. Brain expression is hippocampus-specific.

It localises to the cell membrane. The protein is Immunoglobulin superfamily DCC subclass member 4 (Igdcc4) of Mus musculus (Mouse).